We begin with the raw amino-acid sequence, 125 residues long: Calcitonin receptor-stimulating peptide 3 (125 aa).

The first 25 residues, 1 to 25 (MGFWKFPPFLILSILVLYQAGMLHA), serve as a signal peptide directing secretion. The propeptide occupies 26–79 (APFRMALGSSFDSATLTEEEMSLLLVAMVKDYVQMKATVLEQETEDFSITTQER). Cys-81 and Cys-86 are disulfide-bonded. Leu-116 carries the leucine amide modification. A propeptide spanning residues 122-125 (QPQA) is cleaved from the precursor.

It belongs to the calcitonin family. As to expression, mainly expressed in the thyroid gland and CNS. Found in the nerve cells of cerebrum, hippocampus, hypothalamus, pons/midbrain and thalamus.

Its subcellular location is the secreted. This Sus scrofa (Pig) protein is Calcitonin receptor-stimulating peptide 3 (CRSP3).